The following is an 806-amino-acid chain: Volume-regulated anion channel subunit LRRC8E (806 aa).

Residues 1-22 (MIPVAEFKQFTEQQPAFKVLKP) lie on the Cytoplasmic side of the membrane. The helical transmembrane segment at 23-43 (WWDVLAEYITYAMLMIGVFGC) threads the bilayer. At 44–130 (TLQVTQDKII…YETALHWYAK (87 aa)) the chain is on the extracellular side. A disulfide bridge links Cys54 with Cys311. N-linked (GlcNAc...) asparagine glycans are attached at residues Asn57 and Asn80. Residues 72 to 81 (YDQQSPPSND) are compositionally biased toward polar residues. A disordered region spans residues 72–103 (YDQQSPPSNDSDLETTIPPPTATSSPPREMSG). Residues 131-151 (YFPYLVVIHTLIFIICGNFWF) traverse the membrane as a helical segment. At 152-275 (KFPGTSSKIE…MRQTVLKVCK (124 aa)) the chain is on the cytoplasmic side. Residues 182–213 (EVSGESSQEKPSQERSIDRELSKPNFEEGSPA) are disordered. Residues 188 to 207 (SQEKPSQERSIDRELSKPNF) show a composition bias toward basic and acidic residues. Residues 276 to 296 (FVLITIYNAVLVGKIHFIVPC) form a helical membrane-spanning segment. Residues 297–323 (SVHTEDMTGYNSFCCNHTKAHLFSKLA) lie on the Extracellular side of the membrane. Asn312 carries N-linked (GlcNAc...) asparagine glycosylation. Residues 324 to 344 (ITYLCFLGVYGLTCLYTLYWL) traverse the membrane as a helical segment. The Cytoplasmic portion of the chain corresponds to 345–806 (FRRPLKEYSF…VEVRDKLKED (462 aa)). LRR repeat units lie at residues 544 to 566 (LKSL…VADV), 569 to 589 (HLQK…NALK), 593 to 614 (LVKE…VFSL), 616 to 637 (NLQV…ISLQ), 641 to 662 (KLSV…IRKL), 664 to 685 (GLEE…LFLC), 687 to 708 (KLRH…IGVL), 710 to 731 (LLQY…LFFC), 733 to 754 (KLKT…VGSL), and 756 to 777 (CLVK…LGNC).

It belongs to the LRRC8 family. Heterohexamer; oligomerizes with other LRRC8 proteins (lrrc8a, lrrc8c, lrrc8d and/or lrrc8b) to form a heterohexamer. Detected in a channel complex that contains lrrc8a, lrrc8c and lrrc8e. In vivo, the subunit composition may depend primarily on expression levels, and heterooligomeric channels containing various proportions of the different LRRC8 proteins may coexist.

The protein resides in the cell membrane. Its subcellular location is the endoplasmic reticulum membrane. It localises to the lysosome membrane. It carries out the reaction chloride(in) = chloride(out). The catalysed reaction is iodide(out) = iodide(in). The enzyme catalyses taurine(out) = taurine(in). It catalyses the reaction 2',3'-cGAMP(out) = 2',3'-cGAMP(in). Functionally, non-essential component of the volume-regulated anion channel (VRAC, also named VSOAC channel), an anion channel required to maintain a constant cell volume in response to extracellular or intracellular osmotic changes. The VRAC channel conducts iodide better than chloride and can also conduct organic osmolytes like taurine. Mediates efflux of amino acids, such as aspartate, in response to osmotic stress. The VRAC channel also mediates transport of immunoreactive cyclic dinucleotide GMP-AMP (2'-3'-cGAMP), an immune messenger produced in response to DNA virus in the cytosol. Channel activity requires lrrc8a plus at least one other family member (lrrc8b, lrrc8c, lrrc8d or lrrc8e); channel characteristics depend on the precise subunit composition. Also plays a role in lysosome homeostasis by forming functional lysosomal VRAC channels in response to low cytoplasmic ionic strength condition: lysosomal VRAC channels are necessary for the formation of large lysosome-derived vacuoles, which store and then expel excess water to maintain cytosolic water homeostasis. In Xenopus tropicalis (Western clawed frog), this protein is Volume-regulated anion channel subunit LRRC8E.